We begin with the raw amino-acid sequence, 122 residues long: Neuropeptide B (122 aa).

The first 24 residues, Met-1–Ala-24, serve as a signal peptide directing secretion. Trp-25 is subject to 6'-bromotryptophan. Positions Ser-56–Lys-122 are excised as a propeptide.

Belongs to the neuropeptide B/W family.

The protein localises to the secreted. May be involved in the regulation of feeding, neuroendocrine system, memory, learning and in the afferent pain pathway. The polypeptide is Neuropeptide B (NPB) (Bos taurus (Bovine)).